The following is a 128-amino-acid chain: KESPAMKFERQHMDSGSTSSSNPTYCNQMMKRRNMTQGWCKPVNTFVHEPLADVQAICLQKNITCKNGQSNCYQSSSSMHITDCRLTSGSKYPNCAYQTSQKERHIIVACEGNPYVPVHFDASVEVST.

Over residues 1–13 (KESPAMKFERQHM) the composition is skewed to basic and acidic residues. Residues 1-26 (KESPAMKFERQHMDSGSTSSSNPTYC) form a disordered region. Positions 7 and 10 each coordinate substrate. His-12 (proton acceptor) is an active-site residue. The span at 14-26 (DSGSTSSSNPTYC) shows a compositional bias: polar residues. Intrachain disulfides connect Cys-26–Cys-84, Cys-40–Cys-95, Cys-58–Cys-110, and Cys-65–Cys-72. Asn-34 carries an N-linked (GlcNAc...) asparagine glycan. 41-45 (KPVNT) serves as a coordination point for substrate. N-linked (GlcNAc...) asparagine glycosylation is present at Asn-62. Substrate-binding residues include Lys-66 and Arg-85. His-119 functions as the Proton donor in the catalytic mechanism.

It belongs to the pancreatic ribonuclease family. Monomer. Interacts with and forms tight 1:1 complexes with RNH1. Dimerization of two such complexes may occur. Interaction with RNH1 inhibits this protein. Pancreas.

The protein localises to the secreted. The catalysed reaction is an [RNA] containing cytidine + H2O = an [RNA]-3'-cytidine-3'-phosphate + a 5'-hydroxy-ribonucleotide-3'-[RNA].. It catalyses the reaction an [RNA] containing uridine + H2O = an [RNA]-3'-uridine-3'-phosphate + a 5'-hydroxy-ribonucleotide-3'-[RNA].. Its function is as follows. Endonuclease that catalyzes the cleavage of RNA on the 3' side of pyrimidine nucleotides. Acts on single-stranded and double-stranded RNA. In Equus caballus (Horse), this protein is Ribonuclease pancreatic (RNASE1).